The primary structure comprises 96 residues: Glycine-rich protein DC7.1 (96 aa).

Residues 1-25 form the signal peptide; sequence MGSKIFLLLGLSIAFALLISSEVAA. Positions 29–66 are disordered; it reads SETTTEGASLDGGHHGGGGGGHYSGGGGHGGSHHGGGG. A run of 2 repeats spans residues 42 to 50 and 61 to 67. Residues 42–67 are 2 approximate repeats of H-H-G(4,6)-H; it reads HHGGGGGGHYSGGGGHGGSHHGGGGH. Positions 43 to 66 are enriched in gly residues; sequence HGGGGGGHYSGGGGHGGSHHGGGG.

The protein belongs to the GRP family.

Functionally, may be connected with the initiation of embryogenesis or with the metabolic changes produced by the removal of auxins. The polypeptide is Glycine-rich protein DC7.1 (Daucus carota (Wild carrot)).